Reading from the N-terminus, the 306-residue chain is 4-hydroxy-tetrahydrodipicolinate synthase (306 aa).

Thr-46 is a pyruvate binding site. The active-site Proton donor/acceptor is the Tyr-134. The Schiff-base intermediate with substrate role is filled by Lys-162. Pyruvate is bound at residue Val-204.

The protein belongs to the DapA family. As to quaternary structure, homotetramer; dimer of dimers.

The protein resides in the cytoplasm. The catalysed reaction is L-aspartate 4-semialdehyde + pyruvate = (2S,4S)-4-hydroxy-2,3,4,5-tetrahydrodipicolinate + H2O + H(+). Its pathway is amino-acid biosynthesis; L-lysine biosynthesis via DAP pathway; (S)-tetrahydrodipicolinate from L-aspartate: step 3/4. In terms of biological role, catalyzes the condensation of (S)-aspartate-beta-semialdehyde [(S)-ASA] and pyruvate to 4-hydroxy-tetrahydrodipicolinate (HTPA). This Synechococcus sp. (strain JA-2-3B'a(2-13)) (Cyanobacteria bacterium Yellowstone B-Prime) protein is 4-hydroxy-tetrahydrodipicolinate synthase.